Reading from the N-terminus, the 212-residue chain is Methylthioribulose-1-phosphate dehydratase (212 aa).

H97 and H99 together coordinate Zn(2+).

Belongs to the aldolase class II family. MtnB subfamily. Homotetramer. Zn(2+) is required as a cofactor.

The catalysed reaction is 5-(methylsulfanyl)-D-ribulose 1-phosphate = 5-methylsulfanyl-2,3-dioxopentyl phosphate + H2O. It participates in amino-acid biosynthesis; L-methionine biosynthesis via salvage pathway; L-methionine from S-methyl-5-thio-alpha-D-ribose 1-phosphate: step 2/6. Functionally, catalyzes the dehydration of methylthioribulose-1-phosphate (MTRu-1-P) into 2,3-diketo-5-methylthiopentyl-1-phosphate (DK-MTP-1-P). The sequence is that of Methylthioribulose-1-phosphate dehydratase from Bacillus cereus (strain G9842).